The primary structure comprises 257 residues: Triosephosphate isomerase (257 aa).

Substrate-binding residues include Asn11 and Lys13. The active-site Electrophile is His96. The active-site Proton acceptor is the Glu170.

The protein belongs to the triosephosphate isomerase family. Homodimer.

It carries out the reaction D-glyceraldehyde 3-phosphate = dihydroxyacetone phosphate. It functions in the pathway carbohydrate biosynthesis; gluconeogenesis. Its pathway is carbohydrate degradation; glycolysis; D-glyceraldehyde 3-phosphate from glycerone phosphate: step 1/1. This chain is Triosephosphate isomerase, found in Giardia intestinalis (Giardia lamblia).